We begin with the raw amino-acid sequence, 2136 residues long: Protein Ycf2 (2136 aa).

1404-1411 (GPIETGRS) provides a ligand contact to ATP.

The protein belongs to the Ycf2 family.

Its subcellular location is the plastid. It localises to the chloroplast stroma. Functionally, probable ATPase of unknown function. Its presence in a non-photosynthetic plant (Epifagus virginiana) and experiments in tobacco indicate that it has an essential function which is probably not related to photosynthesis. This Marchantia polymorpha (Common liverwort) protein is Protein Ycf2.